The chain runs to 168 residues: MIVLGRIVAPFGVKGWVKVHPFGDDPLSWGEMPQWWLADDADAPESAWQPVTLAGFKEHGAGLVAAFVGHDDRNAAEALQGRFIGAPREALPKPDVDEYYWGDLIGLAVVNQADEALGTVEALMSTGAHDVLQVRDGDDERLIPFVAAYVLDVDLAARTIRVDWQKDW.

The PRC barrel domain maps to 96–168; the sequence is VDEYYWGDLI…TIRVDWQKDW (73 aa).

It belongs to the RimM family. In terms of assembly, binds ribosomal protein uS19.

It is found in the cytoplasm. Functionally, an accessory protein needed during the final step in the assembly of 30S ribosomal subunit, possibly for assembly of the head region. Essential for efficient processing of 16S rRNA. May be needed both before and after RbfA during the maturation of 16S rRNA. It has affinity for free ribosomal 30S subunits but not for 70S ribosomes. This chain is Ribosome maturation factor RimM, found in Aromatoleum aromaticum (strain DSM 19018 / LMG 30748 / EbN1) (Azoarcus sp. (strain EbN1)).